A 419-amino-acid chain; its full sequence is MDKFRVQGPTTLQGEVTISGAKNAALPILFAALLAEEPVEIQNVPKLKDVDTSMKLLSQLGAKVERNGSVHIDASQVNVFCAPYDLVKTMRASIWALGPLVARFGQGQVSLPGGCTIGARPVDLHITGLEQLGATIKLEEGYVKASVEGRLKGAHIVMDKVSVGATVTIMCAATLAEGTTIIENAAREPEIVDTANFLVTLGAKIAGQGTDRITIEGVERLGGGVYRVLPDRIETGTFLVAAAISRGKILCRNAQPDTLDAVLAKLRDAGADIEVGEDWISLDMHGKRPKAVNVRTAPHPAFPTDMQAQFTLLNLVAEGTGFITETVFENRFMHVPELSRMGARAEIESNTVICHGIETLSGAQVMATDLRASASLVLAGCIAEGTTIVDRIYHIDRGYERIEDKLRALGANIERVKGE.

22–23 (KN) contributes to the phosphoenolpyruvate binding site. A UDP-N-acetyl-alpha-D-glucosamine-binding site is contributed by Arg-91. The Proton donor role is filled by Cys-115. Cys-115 carries the 2-(S-cysteinyl)pyruvic acid O-phosphothioketal modification. UDP-N-acetyl-alpha-D-glucosamine contacts are provided by residues 120–124 (RPVDL), 160–163 (KVSV), Asp-305, and Val-327.

It belongs to the EPSP synthase family. MurA subfamily.

The protein localises to the cytoplasm. It catalyses the reaction phosphoenolpyruvate + UDP-N-acetyl-alpha-D-glucosamine = UDP-N-acetyl-3-O-(1-carboxyvinyl)-alpha-D-glucosamine + phosphate. It participates in cell wall biogenesis; peptidoglycan biosynthesis. Cell wall formation. Adds enolpyruvyl to UDP-N-acetylglucosamine. This is UDP-N-acetylglucosamine 1-carboxyvinyltransferase from Salmonella dublin (strain CT_02021853).